A 425-amino-acid chain; its full sequence is D-tagatose 6-phosphate 4-epimerase (425 aa).

Belongs to the GatZ/KbaZ family.

The catalysed reaction is keto-D-tagatose 6-phosphate = keto-D-fructose 6-phosphate. It participates in carbohydrate metabolism. In terms of biological role, involved in galactitol and D-altritol catabolism. Catalyzes the epimerization of D-tagatose 6-phosphate to D-fructose 6-phosphate. The sequence is that of D-tagatose 6-phosphate 4-epimerase from Agrobacterium fabrum (strain C58 / ATCC 33970) (Agrobacterium tumefaciens (strain C58)).